Here is a 225-residue protein sequence, read N- to C-terminus: MKIMQINLVDYKEWTESLGYDREWKIQNFQHGFLSRLNEIAAEINSFIITYRYDSYIMLLDGVLIGKNDYILTKIKELSPVPIDICFGYGKTLLDAERNCSINMDNILLAKDEKVLVAHFDLDGFSRKRFLFDAYLEVYKIYNKLFNYAMELGGLAYYFGGDNIGIFLGVDNINKVIELANSFPNMKVGIGIGNNPREALKNAAEALHIIRIYRDRKIEIVDSKN.

The protein belongs to the archaeal-type GTP cyclohydrolase family.

It catalyses the reaction GTP + 3 H2O = 2-amino-5-formylamino-6-(5-phospho-D-ribosylamino)pyrimidin-4(3H)-one + 2 phosphate + 2 H(+). Catalyzes the formation of 2-amino-5-formylamino-6-ribofuranosylamino-4(3H)-pyrimidinone ribonucleotide monophosphate and inorganic phosphate from GTP. Also has an independent pyrophosphate phosphohydrolase activity. This Sulfurisphaera tokodaii (strain DSM 16993 / JCM 10545 / NBRC 100140 / 7) (Sulfolobus tokodaii) protein is GTP cyclohydrolase III.